The primary structure comprises 139 residues: Protein AC53 (139 aa).

It localises to the host cytoplasm. The protein resides in the host nucleus. In terms of biological role, plays a role in nucleocapsid assembly. This chain is Protein AC53 (AC53), found in Lepidoptera (butterflies and moths).